Consider the following 445-residue polypeptide: Putative diacyglycerol O-acyltransferase Rv2285 (445 aa).

The Proton acceptor role is filled by His-135.

This sequence belongs to the long-chain O-acyltransferase family.

It carries out the reaction an acyl-CoA + a 1,2-diacyl-sn-glycerol = a triacyl-sn-glycerol + CoA. It catalyses the reaction di-(9Z)-octadecenoylglycerol + (9Z)-octadecenoyl-CoA = 1,2,3-tri-(9Z-octadecenoyl)-glycerol + CoA. It functions in the pathway glycerolipid metabolism; triacylglycerol biosynthesis. Its function is as follows. Catalyzes the terminal and only committed step in triacylglycerol synthesis by using diacylglycerol and fatty acyl CoA as substrates. Required for storage lipid synthesis. In terms of biological role, upon expression in E.coli functions weakly as a triacylglycerol synthase, making triacylglycerol (TG) from diolein and long-chain fatty acyl-CoA. Has very weak wax synthase activity, incorporating palmityl alcohol into wax esters in the presence of palmitoyl-CoA. The chain is Putative diacyglycerol O-acyltransferase Rv2285 from Mycobacterium tuberculosis (strain ATCC 25618 / H37Rv).